A 153-amino-acid polypeptide reads, in one-letter code: Myosin regulatory light chain, smooth muscle (153 aa).

EF-hand domains lie at 12 to 47, 81 to 116, and 117 to 152; these read SQIQEFKEAFTMIDANRDGFIDQEDLKDTYASLGRG, DPEETILEAFKILDADNKGVINKNYLAEIMMTQADR, and FSQSEVNQMFDISPIDVAGNLDYKSLCYIITHGQEE. Ca(2+) is bound by residues Asp-25, Asn-27, Asp-29, and Asp-36.

In terms of biological role, in molluscan muscle, calcium regulation is associated with myosin rather than with actin. Muscle myosin contains two types of light chains: the catalytic light chain, essential for ATPase activity, and the regulatory light chain, a calcium-binding protein responsible for Ca(2+) dependent binding and Ca(2+) dependent Mg-ATPase activity. The chain is Myosin regulatory light chain, smooth muscle from Halocynthia roretzi (Sea squirt).